Consider the following 529-residue polypeptide: Cytochrome P450 monooxygenase ausG (529 aa).

Residues 31 to 51 form a helical membrane-spanning segment; the sequence is LLVVCGLPGLLLLFFVTAILL. Cys470 lines the heme pocket.

The protein belongs to the cytochrome P450 family. Heme is required as a cofactor.

Its subcellular location is the membrane. It participates in secondary metabolite biosynthesis; terpenoid biosynthesis. Cytochrome P450 monooxygenase; part of the gene cluster that mediates the biosynthesis of calidodehydroaustin, a fungal meroterpenoid. The first step of the pathway is the synthesis of 3,5-dimethylorsellinic acid by the polyketide synthase ausA. 3,5-dimethylorsellinic acid is then prenylated by the polyprenyl transferase ausN. Further epoxidation by the FAD-dependent monooxygenase ausM and cyclization by the probable terpene cyclase ausL lead to the formation of protoaustinoid A. Protoaustinoid A is then oxidized to spiro-lactone preaustinoid A3 by the combined action of the FAD-binding monooxygenases ausB and ausC, and the dioxygenase ausE. Acid-catalyzed keto-rearrangement and ring contraction of the tetraketide portion of preaustinoid A3 by ausJ lead to the formation of preaustinoid A4. The aldo-keto reductase ausK, with the help of ausH, is involved in the next step by transforming preaustinoid A4 into isoaustinone which is in turn hydroxylated by the P450 monooxygenase ausI to form austinolide. The cytochrome P450 monooxygenase ausG modifies austinolide to austinol. Austinol is further acetylated to austin by the O-acetyltransferase ausP, which spontaneously changes to dehydroaustin. The cytochrome P450 monooxygenase ausR then converts dehydroaustin is into 7-dehydrodehydroaustin. The hydroxylation catalyzed by ausR permits the O-acetyltransferase ausQ to add an additional acetyl group to the molecule, leading to the formation of acetoxydehydroaustin. The short chain dehydrogenase ausT catalyzes the reduction of the double bond present between carbon atoms 1 and 2 to convert 7-dehydrodehydroaustin into 1,2-dihydro-7-hydroxydehydroaustin. AusQ catalyzes not only an acetylation reaction but also the addition of the PKS ausV diketide product to 1,2-dihydro-7-hydroxydehydroaustin, forming precalidodehydroaustin. Finally, the iron/alpha-ketoglutarate-dependent dioxygenase converts precalidodehydroaustin into calidodehydroaustin. This is Cytochrome P450 monooxygenase ausG from Aspergillus calidoustus.